The sequence spans 273 residues: Beta-lactamase OXA-23 (273 aa).

A signal peptide spans 1 to 17 (MNKYFTCYVVASLFLSG). Residue Ser-79 is the Acyl-ester intermediate of the active site. Residues Ser-79, Lys-82, Ser-126, Thr-217, Trp-219, and Arg-259 each contribute to the a beta-lactam site. Lys-82 carries the N6-carboxylysine modification.

This sequence belongs to the class-D beta-lactamase family. In terms of assembly, monomer. In terms of processing, carboxylated on the epsilon-amino group of a lysine, with the resulting carbamate functional group serving as a general base. Probably N-carboxylated at Lys-82 at neutral pH in vivo and undergoes complete N-decarboxylation, at pH 4.1, in vitro.

The protein resides in the periplasm. It catalyses the reaction a beta-lactam + H2O = a substituted beta-amino acid. With respect to regulation, inhibited by the desmethyl carbapenem, MA-1-206, via a covalent binding to Ser-79. Functionally, class D beta-lactamase which confers resistance to the beta-lactam antibiotics, including ampicillin, and carbapenems such as imipenem and meropenem. Acts via hydrolysis of the beta-lactam ring. Has penicillin-, cephalosporin- and carbapenem-hydrolyzing activities, but lacks ceftazidime-hydrolyzing activity. The polypeptide is Beta-lactamase OXA-23 (Acinetobacter baumannii).